We begin with the raw amino-acid sequence, 294 residues long: MPSSREIRNKIKSVKNTQKITRAMEMVAASKMRKAQDRMKKARPYGEKIRNVAAHMSNASVEYRHPFLISRDSVKRVGIIVVTSDKGLCGGLNTNVLRRALNEIRTWETEGNHVDACCIGNKGLGFMSRLGTQVISQVTGLGDAPNMERLIGAVKVVLDAYTEGQLDRVYIFYNRFINTMKQMPVMEQLLPLTDDRISSEDGEARPTRAPWDYIYEPEAKPVIDDIMVRYIEALVYQAVAENMASEQSARMVAMKAASDNAGNLIDELTLIYNKSRQAAITKELSEIVGGAAAV.

The protein belongs to the ATPase gamma chain family. In terms of assembly, F-type ATPases have 2 components, CF(1) - the catalytic core - and CF(0) - the membrane proton channel. CF(1) has five subunits: alpha(3), beta(3), gamma(1), delta(1), epsilon(1). CF(0) has three main subunits: a, b and c.

It is found in the cell inner membrane. Produces ATP from ADP in the presence of a proton gradient across the membrane. The gamma chain is believed to be important in regulating ATPase activity and the flow of protons through the CF(0) complex. The protein is ATP synthase gamma chain of Nitrosomonas europaea (strain ATCC 19718 / CIP 103999 / KCTC 2705 / NBRC 14298).